Reading from the N-terminus, the 144-residue chain is Nucleoside diphosphate kinase (144 aa).

6 residues coordinate ATP: Lys-9, Phe-57, Arg-85, Thr-91, Arg-102, and Asn-112. His-120 (pros-phosphohistidine intermediate) is an active-site residue.

This sequence belongs to the NDK family. Homotetramer. The cofactor is Mg(2+).

It localises to the cytoplasm. The catalysed reaction is a 2'-deoxyribonucleoside 5'-diphosphate + ATP = a 2'-deoxyribonucleoside 5'-triphosphate + ADP. It carries out the reaction a ribonucleoside 5'-diphosphate + ATP = a ribonucleoside 5'-triphosphate + ADP. In terms of biological role, major role in the synthesis of nucleoside triphosphates other than ATP. The ATP gamma phosphate is transferred to the NDP beta phosphate via a ping-pong mechanism, using a phosphorylated active-site intermediate. The polypeptide is Nucleoside diphosphate kinase (Streptococcus uberis (strain ATCC BAA-854 / 0140J)).